The sequence spans 75 residues: Small ribosomal subunit protein eS28 (75 aa).

Belongs to the eukaryotic ribosomal protein eS28 family.

The sequence is that of Small ribosomal subunit protein eS28 from Natronomonas pharaonis (strain ATCC 35678 / DSM 2160 / CIP 103997 / JCM 8858 / NBRC 14720 / NCIMB 2260 / Gabara) (Halobacterium pharaonis).